Here is a 574-residue protein sequence, read N- to C-terminus: Penicillin-binding protein activator LpoA (574 aa).

The N-terminal stretch at 1 to 25 (MTILLQRAKFKKRLMPILFPLMLAG) is a signal peptide. A lipid anchor (N-palmitoyl cysteine) is attached at C26. A lipid anchor (S-diacylglycerol cysteine) is attached at C26.

The protein belongs to the LpoA family. Interacts with PBP1a.

It localises to the cell outer membrane. Its function is as follows. Regulator of peptidoglycan synthesis that is essential for the function of penicillin-binding protein 1A (PBP1a). The sequence is that of Penicillin-binding protein activator LpoA from Mannheimia succiniciproducens (strain KCTC 0769BP / MBEL55E).